Here is a 363-residue protein sequence, read N- to C-terminus: Aminomethyltransferase (363 aa).

This sequence belongs to the GcvT family. As to quaternary structure, the glycine cleavage system is composed of four proteins: P, T, L and H.

The enzyme catalyses N(6)-[(R)-S(8)-aminomethyldihydrolipoyl]-L-lysyl-[protein] + (6S)-5,6,7,8-tetrahydrofolate = N(6)-[(R)-dihydrolipoyl]-L-lysyl-[protein] + (6R)-5,10-methylene-5,6,7,8-tetrahydrofolate + NH4(+). In terms of biological role, the glycine cleavage system catalyzes the degradation of glycine. This Thermotoga neapolitana (strain ATCC 49049 / DSM 4359 / NBRC 107923 / NS-E) protein is Aminomethyltransferase.